The chain runs to 146 residues: Prolactin-inducible protein homolog (146 aa).

Residues 1–26 (MQGLSFTFSAVTLFLVLCLQLGIIES) form the signal peptide. Pyrrolidone carboxylic acid is present on Q27. Intrachain disulfides connect C65–C91 and C89–C123.

It belongs to the PIP family. Monomer. Interacts with AZGP1. Lacrimal and submaxillary glands.

It is found in the secreted. In Mus musculus (Mouse), this protein is Prolactin-inducible protein homolog (Pip).